An 865-amino-acid polypeptide reads, in one-letter code: Alanine--tRNA ligase (865 aa).

Positions 556, 560, 660, and 664 each coordinate Zn(2+).

The protein belongs to the class-II aminoacyl-tRNA synthetase family. The cofactor is Zn(2+).

It localises to the cytoplasm. It catalyses the reaction tRNA(Ala) + L-alanine + ATP = L-alanyl-tRNA(Ala) + AMP + diphosphate. Its function is as follows. Catalyzes the attachment of alanine to tRNA(Ala) in a two-step reaction: alanine is first activated by ATP to form Ala-AMP and then transferred to the acceptor end of tRNA(Ala). Also edits incorrectly charged Ser-tRNA(Ala) and Gly-tRNA(Ala) via its editing domain. The protein is Alanine--tRNA ligase of Ruthia magnifica subsp. Calyptogena magnifica.